A 107-amino-acid chain; its full sequence is Putative double-stranded DNA mimic protein ETA_15890 (107 aa).

The protein belongs to the putative dsDNA mimic protein family.

Its function is as follows. May act as a double-stranded DNA (dsDNA) mimic. Probably regulates the activity of a dsDNA-binding protein. The sequence is that of Putative double-stranded DNA mimic protein ETA_15890 from Erwinia tasmaniensis (strain DSM 17950 / CFBP 7177 / CIP 109463 / NCPPB 4357 / Et1/99).